The chain runs to 249 residues: Proteasome subunit alpha type-7-B (249 aa).

It belongs to the peptidase T1A family. In terms of assembly, the 26S proteasome consists of a 20S proteasome core and two 19S regulatory subunits. The 20S proteasome core is composed of 28 subunits that are arranged in four stacked rings, resulting in a barrel-shaped structure. The two end rings are each formed by seven alpha subunits, and the two central rings are each formed by seven beta subunits. The catalytic chamber with the active sites is on the inside of the barrel.

Its subcellular location is the cytoplasm. It is found in the nucleus. Its function is as follows. The proteasome is a multicatalytic proteinase complex which is characterized by its ability to cleave peptides with Arg, Phe, Tyr, Leu, and Glu adjacent to the leaving group at neutral or slightly basic pH. The proteasome has an ATP-dependent proteolytic activity. The protein is Proteasome subunit alpha type-7-B (PAD1) of Oryza sativa subsp. indica (Rice).